The following is a 323-amino-acid chain: Beta-ketoacyl-[acyl-carrier-protein] synthase III (323 aa).

Catalysis depends on residues cysteine 113 and histidine 250. The ACP-binding stretch occupies residues 251–255 (QANKR). Asparagine 280 is a catalytic residue.

Belongs to the thiolase-like superfamily. FabH family. Homodimer.

The protein resides in the cytoplasm. It catalyses the reaction malonyl-[ACP] + acetyl-CoA + H(+) = 3-oxobutanoyl-[ACP] + CO2 + CoA. Its pathway is lipid metabolism; fatty acid biosynthesis. Catalyzes the condensation reaction of fatty acid synthesis by the addition to an acyl acceptor of two carbons from malonyl-ACP. Catalyzes the first condensation reaction which initiates fatty acid synthesis and may therefore play a role in governing the total rate of fatty acid production. Possesses both acetoacetyl-ACP synthase and acetyl transacylase activities. Its substrate specificity determines the biosynthesis of branched-chain and/or straight-chain of fatty acids. In Chelativorans sp. (strain BNC1), this protein is Beta-ketoacyl-[acyl-carrier-protein] synthase III.